The sequence spans 69 residues: MKKFLIFLIKVYRKYISPLKVPCCRFYPTCSQYVLEALQKHGIIKGGFMSIKRILRCNPFCKGGYDPVK.

This sequence belongs to the UPF0161 family.

The protein resides in the cell membrane. Its function is as follows. Could be involved in insertion of integral membrane proteins into the membrane. This is Putative membrane protein insertion efficiency factor from Clostridium kluyveri (strain NBRC 12016).